Consider the following 307-residue polypeptide: Acetaldehyde dehydrogenase (307 aa).

Cys-131 functions as the Acyl-thioester intermediate in the catalytic mechanism. NAD(+) is bound by residues 162 to 170 (SIGPGTRKN) and Asn-273.

Belongs to the acetaldehyde dehydrogenase family.

The catalysed reaction is acetaldehyde + NAD(+) + CoA = acetyl-CoA + NADH + H(+). The sequence is that of Acetaldehyde dehydrogenase (nahO) from Stutzerimonas stutzeri (Pseudomonas stutzeri).